The primary structure comprises 544 residues: Terpene synthase 9 (544 aa).

Positions 296, 300, and 449 each coordinate Mg(2+). The short motif at 296–300 is the DDXXD motif element; it reads DDTFD.

The protein belongs to the terpene synthase family. Tpsa subfamily. The cofactor is Mg(2+). Mn(2+) serves as cofactor.

The catalysed reaction is (2E,6E)-farnesyl diphosphate = (1E,4E)-germacrene B + diphosphate. It catalyses the reaction (2E)-geranyl diphosphate = terpinolene + diphosphate. It carries out the reaction (2E)-geranyl diphosphate = limonene + diphosphate. The enzyme catalyses (2E)-geranyl diphosphate = beta-myrcene + diphosphate. The catalysed reaction is (2Z,6Z)-farnesyl diphosphate = germacrene A + diphosphate. It catalyses the reaction (2Z,6Z)-farnesyl diphosphate = alpha-humulene + diphosphate. It functions in the pathway secondary metabolite biosynthesis; terpenoid biosynthesis. In terms of biological role, sesquiterpene synthase involved in the biosynthesis of volatile compounds. Mediates the conversion of (2E,6E)-farnesyl diphosphate (FPP) into (1E,4E)-germacrene B, but also smaller amounts of germacrene A and C, and of (2Z,6Z)-farnesyl diphosphate ((ZZ)-FPP) into alpha-humulene, germacrene A and germacrene B. Can act with a low efficiency as a monoterpene synthase with geranyl diphosphate (GPP) as substrate, thus producing beta-myrcene, limonene and terpinolene. This chain is Terpene synthase 9, found in Solanum habrochaites (Wild tomato).